Consider the following 484-residue polypeptide: Glutamyl-tRNA(Gln) amidotransferase subunit A (484 aa).

Catalysis depends on charge relay system residues lysine 77 and serine 152. The Acyl-ester intermediate role is filled by serine 176.

It belongs to the amidase family. GatA subfamily. Heterotrimer of A, B and C subunits.

It catalyses the reaction L-glutamyl-tRNA(Gln) + L-glutamine + ATP + H2O = L-glutaminyl-tRNA(Gln) + L-glutamate + ADP + phosphate + H(+). In terms of biological role, allows the formation of correctly charged Gln-tRNA(Gln) through the transamidation of misacylated Glu-tRNA(Gln) in organisms which lack glutaminyl-tRNA synthetase. The reaction takes place in the presence of glutamine and ATP through an activated gamma-phospho-Glu-tRNA(Gln). This Pseudomonas aeruginosa (strain ATCC 15692 / DSM 22644 / CIP 104116 / JCM 14847 / LMG 12228 / 1C / PRS 101 / PAO1) protein is Glutamyl-tRNA(Gln) amidotransferase subunit A.